The following is a 292-amino-acid chain: MASLKDVQNQIVSIKKTKQITKAMNMVASAKLRGAQDRIERFRPYADKFYEMLGDLAAGADSSVHPLLEVHEEIKTVGIVLTTSDRGLCGSFNANMINAALKKAAEKKAEGKAVKFYCVGKKGAAAIKKTEYEIVEAYNDDMTHFDFNLAASIGNKVIDAYLAEELDEVFLVFGEFVNVASQPPNTLQILPMSSDAAGEEGESGANSEYIYEPSVEGLLAELLPRFVKVQVYRGLLDTSCSEHAARMAAMDNASRACDDMTETLTLLYNKTRQAAITADLMDIVGGAEALKG.

Belongs to the ATPase gamma chain family. In terms of assembly, F-type ATPases have 2 components, CF(1) - the catalytic core - and CF(0) - the membrane proton channel. CF(1) has five subunits: alpha(3), beta(3), gamma(1), delta(1), epsilon(1). CF(0) has three main subunits: a, b and c.

It localises to the cell inner membrane. Produces ATP from ADP in the presence of a proton gradient across the membrane. The gamma chain is believed to be important in regulating ATPase activity and the flow of protons through the CF(0) complex. The sequence is that of ATP synthase gamma chain from Maridesulfovibrio salexigens (strain ATCC 14822 / DSM 2638 / NCIMB 8403 / VKM B-1763) (Desulfovibrio salexigens).